The sequence spans 275 residues: NH(3)-dependent NAD(+) synthetase (275 aa).

ATP is bound at residue 46–53; sequence GISGGQDS. D52 lines the Mg(2+) pocket. A deamido-NAD(+)-binding site is contributed by R140. T160 provides a ligand contact to ATP. Residue E165 coordinates Mg(2+). The deamido-NAD(+) site is built by K173 and D180. Residues K189 and T211 each contribute to the ATP site. A deamido-NAD(+)-binding site is contributed by 260–261; the sequence is HK.

It belongs to the NAD synthetase family. As to quaternary structure, homodimer.

It catalyses the reaction deamido-NAD(+) + NH4(+) + ATP = AMP + diphosphate + NAD(+) + H(+). It functions in the pathway cofactor biosynthesis; NAD(+) biosynthesis; NAD(+) from deamido-NAD(+) (ammonia route): step 1/1. Catalyzes the ATP-dependent amidation of deamido-NAD to form NAD. Uses ammonia as a nitrogen source. The sequence is that of NH(3)-dependent NAD(+) synthetase from Salmonella dublin (strain CT_02021853).